The chain runs to 405 residues: Acetate kinase (405 aa).

Asn7 is a binding site for Mg(2+). An ATP-binding site is contributed by Lys14. Arg99 contacts substrate. The active-site Proton donor/acceptor is the Asp156. An ATP-binding site is contributed by 215–219 (HLGNG). Mg(2+) is bound at residue Glu391.

This sequence belongs to the acetokinase family. In terms of assembly, homodimer. It depends on Mg(2+) as a cofactor. Requires Mn(2+) as cofactor.

It localises to the cytoplasm. It carries out the reaction acetate + ATP = acetyl phosphate + ADP. Its pathway is metabolic intermediate biosynthesis; acetyl-CoA biosynthesis; acetyl-CoA from acetate: step 1/2. In terms of biological role, catalyzes the formation of acetyl phosphate from acetate and ATP. Can also catalyze the reverse reaction. The polypeptide is Acetate kinase (Trichormus variabilis (strain ATCC 29413 / PCC 7937) (Anabaena variabilis)).